Here is a 188-residue protein sequence, read N- to C-terminus: Threonylcarbamoyl-AMP synthase (188 aa).

Residues 3–188 (QLHPSDIKDI…RSGKILRNGQ (186 aa)) enclose the YrdC-like domain.

The protein belongs to the SUA5 family. TsaC subfamily.

The protein localises to the cytoplasm. It catalyses the reaction L-threonine + hydrogencarbonate + ATP = L-threonylcarbamoyladenylate + diphosphate + H2O. Its function is as follows. Required for the formation of a threonylcarbamoyl group on adenosine at position 37 (t(6)A37) in tRNAs that read codons beginning with adenine. Catalyzes the conversion of L-threonine, HCO(3)(-)/CO(2) and ATP to give threonylcarbamoyl-AMP (TC-AMP) as the acyladenylate intermediate, with the release of diphosphate. This chain is Threonylcarbamoyl-AMP synthase, found in Shewanella baltica (strain OS155 / ATCC BAA-1091).